A 725-amino-acid chain; its full sequence is Glutamine-dependent NAD(+) synthetase (725 aa).

The CN hydrolase domain maps to 5 to 275 (VTVATCALNQ…VEVLTATLDL (271 aa)). Glu45 (proton acceptor; for glutaminase activity) is an active-site residue. Lys114 acts as the For glutaminase activity in catalysis. Catalysis depends on Cys175, which acts as the Nucleophile; for glutaminase activity. Residues 325-706 (YHRPEEEISL…KASQTREEQV (382 aa)) are ligase. ATP is bound at residue 355–362 (PLSGGVDS). The active site involves Ser357.

In the C-terminal section; belongs to the NAD synthetase family. In terms of assembly, homohexamer. In terms of tissue distribution, highly expressed in small intestine, kidney, liver and testis. Weakly expressed in skeletal muscle, spleen, lung, heart and brain.

The catalysed reaction is deamido-NAD(+) + L-glutamine + ATP + H2O = L-glutamate + AMP + diphosphate + NAD(+) + H(+). It functions in the pathway cofactor biosynthesis; NAD(+) biosynthesis; NAD(+) from deamido-NAD(+) (L-Gln route): step 1/1. Functionally, catalyzes the final step of the nicotinamide adenine dinucleotide (NAD) de novo synthesis pathway, the ATP-dependent amidation of deamido-NAD using L-glutamine as a nitrogen source. The sequence is that of Glutamine-dependent NAD(+) synthetase (Nadsyn1) from Mus musculus (Mouse).